A 333-amino-acid chain; its full sequence is MVAAQDPPNAPHIPVLLEPILTRCAPITGTWLDGTFGAGGYARGLLEAGADRVIGVDQDPLALEMAADWAGDYGDRLRLVAGNFEALDAHAGGPLDGVVLDLGVSSMQLDRAERGFSFLRDGPLDMRMAQHGRSAADLVAEEDADMLADILFHLGEERAARRIARAIVAARAVAPITRTSQLAEIVASCLPRPKPGQSHAATRSFQALRIAVNDELGALVRGLEAAEGALEPGGWLAVVTFHSIEDRIVKRFFTQASGGAGRANRYAPETEDTPARFRLEPRKAIAPTEAEVAANPRARSARLRIGRRTAAPAMPADRAALGLPHLYTLTETP.

Residues Gly-39–Tyr-41, Asp-57, Phe-84, Asp-101, and Gln-108 contribute to the S-adenosyl-L-methionine site.

This sequence belongs to the methyltransferase superfamily. RsmH family.

It localises to the cytoplasm. It catalyses the reaction cytidine(1402) in 16S rRNA + S-adenosyl-L-methionine = N(4)-methylcytidine(1402) in 16S rRNA + S-adenosyl-L-homocysteine + H(+). In terms of biological role, specifically methylates the N4 position of cytidine in position 1402 (C1402) of 16S rRNA. This is Ribosomal RNA small subunit methyltransferase H from Dinoroseobacter shibae (strain DSM 16493 / NCIMB 14021 / DFL 12).